Reading from the N-terminus, the 469-residue chain is Acetyl-CoA decarbonylase/synthase complex subunit beta 1 (469 aa).

4 residues coordinate [Ni-Fe-S] cluster: Cys-189, Cys-192, Cys-278, and Cys-280.

Belongs to the CdhC family. In terms of assembly, monomer. The ACDS complex is made up of alpha, epsilon, beta, gamma and delta chains with a probable stoichiometry of (alpha(2)epsilon(2))(4)-beta(8)-(gamma(1)delta(1))(8) (Potential). The cofactor is [Ni-Fe-S] cluster.

The enzyme catalyses Co(I)-[corrinoid Fe-S protein] + acetyl-CoA + H(+) = methyl-Co(III)-[corrinoid Fe-S protein] + CO + CoA. Its pathway is one-carbon metabolism; methanogenesis from acetate. In terms of biological role, part of a complex that catalyzes the reversible cleavage of acetyl-CoA, allowing growth on acetate as sole source of carbon and energy. The alpha-epsilon complex generates CO from CO(2), while the beta subunit (this protein) combines the CO with CoA and a methyl group to form acetyl-CoA. The methyl group, which is incorporated into acetyl-CoA, is transferred to the beta subunit by a corrinoid iron-sulfur protein (the gamma-delta complex). This chain is Acetyl-CoA decarbonylase/synthase complex subunit beta 1 (cdhC1), found in Methanosarcina thermophila.